A 292-amino-acid chain; its full sequence is Elongation factor Ts (292 aa).

The involved in Mg(2+) ion dislocation from EF-Tu stretch occupies residues 79–82 (TDFV).

It belongs to the EF-Ts family.

The protein localises to the cytoplasm. In terms of biological role, associates with the EF-Tu.GDP complex and induces the exchange of GDP to GTP. It remains bound to the aminoacyl-tRNA.EF-Tu.GTP complex up to the GTP hydrolysis stage on the ribosome. In Staphylococcus epidermidis (strain ATCC 12228 / FDA PCI 1200), this protein is Elongation factor Ts.